We begin with the raw amino-acid sequence, 442 residues long: Large ribosomal subunit protein mL65 (442 aa).

The protein belongs to the mitochondrion-specific ribosomal protein mL65 family. As to quaternary structure, component of the mitochondrial ribosome small subunit (28S) which comprises a 12S rRNA and about 30 distinct proteins.

It localises to the mitochondrion. In Mus musculus (Mouse), this protein is Large ribosomal subunit protein mL65 (Mrps30).